We begin with the raw amino-acid sequence, 445 residues long: Glycine--tRNA ligase (445 aa).

Substrate is bound by residues Arg97 and Glu145. Residues 177–179, 187–192, 262–263, and 308–311 each bind ATP; these read RNE, FRTCEF, EV, and GLTR. A substrate-binding site is contributed by 192–196; sequence FEQME. A substrate-binding site is contributed by 304-308; the sequence is ETSAG.

The protein belongs to the class-II aminoacyl-tRNA synthetase family. As to quaternary structure, homodimer.

It localises to the cytoplasm. The catalysed reaction is tRNA(Gly) + glycine + ATP = glycyl-tRNA(Gly) + AMP + diphosphate. Catalyzes the attachment of glycine to tRNA(Gly). This Borreliella burgdorferi (strain ZS7) (Borrelia burgdorferi) protein is Glycine--tRNA ligase.